The chain runs to 132 residues: Agouti-signaling protein (132 aa).

Positions 1–22 are cleaved as a signal peptide; that stretch reads MDVTRLLLATLLVFLCFFAAYS. N-linked (GlcNAc...) asparagine glycosylation is present at Asn-39. The disordered stretch occupies residues 61-93; it reads KISRKEAEKKRSSKKEASKQKVARPRTPLSVPC. Basic and acidic residues predominate over residues 64-79; it reads RKEAEKKRSSKKEASK. Intrachain disulfides connect Cys-93/Cys-108, Cys-100/Cys-114, Cys-107/Cys-125, Cys-111/Cys-132, and Cys-116/Cys-123. An Agouti domain is found at 93–132; that stretch reads CVSTRGSCKPPAPACCHPCASCQCRFFRSACSCRVLNVNC.

It is found in the secreted. Its function is as follows. Involved in the regulation of melanogenesis. The binding of ASP to MC1R precludes alpha-MSH initiated signaling and thus blocks production of cAMP, leading to a down-regulation of eumelanogenesis (brown/black pigment) and thus increasing synthesis of pheomelanin (yellow/red pigment). The chain is Agouti-signaling protein (ASIP) from Callithrix geoffroyi (Geoffroy's marmoset).